Reading from the N-terminus, the 253-residue chain is DNA repair protein RecO (253 aa).

The protein belongs to the RecO family.

Involved in DNA repair and RecF pathway recombination. The chain is DNA repair protein RecO from Streptococcus agalactiae serotype III (strain NEM316).